We begin with the raw amino-acid sequence, 467 residues long: Glycogen synthase (467 aa).

Lys15 contacts ADP-alpha-D-glucose.

It belongs to the glycosyltransferase 1 family. Bacterial/plant glycogen synthase subfamily.

It catalyses the reaction [(1-&gt;4)-alpha-D-glucosyl](n) + ADP-alpha-D-glucose = [(1-&gt;4)-alpha-D-glucosyl](n+1) + ADP + H(+). Its pathway is glycan biosynthesis; glycogen biosynthesis. In terms of biological role, synthesizes alpha-1,4-glucan chains using ADP-glucose. This Desulfitobacterium hafniense (strain DSM 10664 / DCB-2) protein is Glycogen synthase.